The sequence spans 154 residues: Large ribosomal subunit protein uL30 (154 aa).

Belongs to the universal ribosomal protein uL30 family. Part of the 50S ribosomal subunit.

The polypeptide is Large ribosomal subunit protein uL30 (Methanococcus maripaludis (strain C5 / ATCC BAA-1333)).